An 85-amino-acid polypeptide reads, in one-letter code: U4-theraphotoxin-Hhn1l (85 aa).

A signal peptide spans Met-1–Ala-22. A propeptide spanning residues Glu-23 to Arg-48 is cleaved from the precursor. Cystine bridges form between Cys-52-Cys-66, Cys-56-Cys-77, and Cys-71-Cys-82.

The protein belongs to the neurotoxin 12 (Hwtx-2) family. 02 (Hwtx-2) subfamily. In terms of tissue distribution, expressed by the venom gland.

The protein localises to the secreted. Its function is as follows. Postsynaptic neurotoxin. This is U4-theraphotoxin-Hhn1l from Cyriopagopus hainanus (Chinese bird spider).